The primary structure comprises 252 residues: Trans-aconitate 2-methyltransferase (252 aa).

The protein belongs to the methyltransferase superfamily. Tam family.

It is found in the cytoplasm. It catalyses the reaction trans-aconitate + S-adenosyl-L-methionine = (E)-3-(methoxycarbonyl)pent-2-enedioate + S-adenosyl-L-homocysteine. Functionally, catalyzes the S-adenosylmethionine monomethyl esterification of trans-aconitate. This is Trans-aconitate 2-methyltransferase from Escherichia coli (strain 55989 / EAEC).